Here is a 175-residue protein sequence, read N- to C-terminus: MFIFLFGLAAFFLCLSAEFQKAKALLRAQVFLKGKDLKWDGESCYLPENRAFGLGIAALVCVSVAQIVGNVVICRGFTKTDKTRTTIFCIILLLFSWVNFAVAVTLISVGASMNREQIYGKGWLNRECYLVKDGVFAASGFLSVTTMAAILGAFAFKVKPSLQVENHDKRHTQNV.

Residues Met-1–Ala-24 form the signal peptide. Residues Leu-25–Phe-52 are Cytoplasmic-facing. Residues Gly-53–Ile-73 form a helical membrane-spanning segment. Topologically, residues Cys-74 to Thr-86 are extracellular. Residues Ile-87–Ile-107 form a helical membrane-spanning segment. Topologically, residues Ser-108–Val-135 are cytoplasmic. The helical transmembrane segment at Phe-136–Phe-156 threads the bilayer. The Extracellular portion of the chain corresponds to Lys-157 to Val-175.

The protein belongs to the DESIGUAL family. As to quaternary structure, interacts with CRK19.

It localises to the cell membrane. Functionally, together with MWL2, contributes to secondary cell wall biology, specifically lignin biosynthesis. The sequence is that of Protein MODIFYING WALL LIGNIN-1 from Arabidopsis thaliana (Mouse-ear cress).